The chain runs to 141 residues: Large ribosomal subunit protein uL11 (141 aa).

This sequence belongs to the universal ribosomal protein uL11 family. Part of the ribosomal stalk of the 50S ribosomal subunit. Interacts with L10 and the large rRNA to form the base of the stalk. L10 forms an elongated spine to which L12 dimers bind in a sequential fashion forming a multimeric L10(L12)X complex. One or more lysine residues are methylated.

In terms of biological role, forms part of the ribosomal stalk which helps the ribosome interact with GTP-bound translation factors. The protein is Large ribosomal subunit protein uL11 of Lacticaseibacillus casei (strain BL23) (Lactobacillus casei).